A 643-amino-acid chain; its full sequence is E3 ubiquitin-protein ligase AMFR (643 aa).

The next 6 membrane-spanning stretches (helical) occupy residues 82 to 102 (LFVWVLVNTACCVLMLVAKLI), 122 to 142 (FWNFIFYKFIFIFGVLNVQTV), 186 to 206 (VLSLLIAMLLSCCGLAVVCCV), 215 to 235 (TLAFMAAESLLVTVRTAHVIL), 254 to 274 (GTYVYYTDFVMELALLSLDLM), and 276 to 296 (HIHMLLFGNIWLSMASLVIFM). The segment at 341-379 (CAICWDSMQAARKLPCGHLFHNSCLRSWLEQDTSCPTCR) adopts an RING-type zinc-finger fold. A helical membrane pass occupies residues 429 to 449 (IASWLPSFSVEVMHTTNILGI). The CUE domain occupies 456–498 (QLNAMAHQIQEMFPQVPYHLVLQDLQMTRSVEITTDNILEGRI). Residues 504–535 (TQRSDSLRPALNSPVERPSPDLEEGEASVQTE) form a disordered region. Phosphoserine is present on residues Ser516 and Ser542. The tract at residues 598–624 (LNKSSEDDGASERLLPSEGTSSDPVTL) is disordered. Residues 622 to 640 (VTLRRRMLAAAAERRLQRQ) are VCP/p97-interacting motif (VIM).

Interacts with RNF5. Also forms an ERAD complex containing VCP/p97, NGLY1; PSMC1; SAKS1 and RAD23B required for coupling retrotranslocation, ubiquitination and deglycosylation. Interacts with DERL1. Interacts (through a region distinct from the RING finger) with UBE2G2/UBC7. Component of the VCP/p97-AMFR/gp78 complex that enhances VCP/p97 binding to polyubiquitinated proteins for their degradation by the endoplasmic reticulum-associated degradation (ERAD) pathway. Interacts (via the VIM) with VCP/p97. Interacts (via its membrane domain) with INSIG1; the interaction initiates the sterol-mediated ubiquitination and degradation of HMGCR by the ERAD pathway. Interacts with AUP1, UBE2G2 and RNF139/TRC8; interaction with AUP1 facilitates interaction of AMFR with ubiquitin-conjugating enzyme UBE2G2 and ubiquitin ligase RNF139, leading to sterol-induced ubiquitination of HNGCR and its subsequent proteasomal degradation. Interacts with BAG6. Interacts with USP13 (via UBA 2 domain); the interaction is direct. Interacts with LMBR1L, UBAC2 and CTNNB1. Interacts with C18orf32. Post-translationally, palmitoylation of the RING-type zing finger by ZDHHC6 promotes localization to the peripheral endoplasmic reticulum. As to expression, expressed in heart, brain, liver, lung, skeletal muscle, kidney and testis. Not detected in spleen.

The protein localises to the endoplasmic reticulum membrane. It catalyses the reaction [E2 ubiquitin-conjugating enzyme]-S-ubiquitinyl-L-cysteine + [acceptor protein]-L-cysteine = [E2 ubiquitin-conjugating enzyme]-L-cysteine + [acceptor protein]-S-ubiquitinyl-L-cysteine.. It participates in protein modification; protein ubiquitination. Functionally, E3 ubiquitin-protein ligase that mediates the polyubiquitination of lysine and cysteine residues on target proteins, such as CD3D, CYP3A4, CFTR, INSIG1, SOAT2/ACAT2 and APOB for proteasomal degradation. Component of a VCP/p97-AMFR/gp78 complex that participates in the final step of endoplasmic reticulum-associated degradation (ERAD). The VCP/p97-AMFR/gp78 complex is involved in the sterol-accelerated ERAD degradation of HMGCR through binding to the HMGCR-INSIG1 complex at the ER membrane. In addition, interaction of AMFR with AUP1 facilitates interaction of AMFR with ubiquitin-conjugating enzyme UBE2G2 and ubiquitin ligase RNF139, leading to sterol-induced HMGCR ubiquitination. The ubiquitinated HMGCR is then released from the ER by the complex into the cytosol for subsequent destruction. In addition to ubiquitination on lysine residues, catalyzes ubiquitination on cysteine residues: together with INSIG1, mediates polyubiquitination of SOAT2/ACAT2 at 'Cys-277', leading to its degradation when the lipid levels are low. Catalyzes ubiquitination and subsequent degradation of INSIG1 when cells are depleted of sterols. Mediates polyubiquitination of INSIG2 at 'Cys-215' in some tissues, leading to its degradation. Also regulates ERAD through the ubiquitination of UBL4A a component of the BAG6/BAT3 complex. Also acts as a scaffold protein to assemble a complex that couples ubiquitination, retranslocation and deglycosylation. Mediates tumor invasion and metastasis as a receptor for the GPI/autocrine motility factor. In association with LMBR1L and UBAC2, negatively regulates the canonical Wnt signaling pathway in the lymphocytes by promoting the ubiquitin-mediated degradation of CTNNB1 and Wnt receptors FZD6 and LRP6. Regulates NF-kappa-B and MAPK signaling pathways by mediating 'Lys-27'-linked polyubiquitination of TAB3 and promoting subsequent TAK1/MAP3K7 activation. The protein is E3 ubiquitin-protein ligase AMFR (Amfr) of Mus musculus (Mouse).